Reading from the N-terminus, the 455-residue chain is Beta-1,4-mannosyltransferase bre-3 (455 aa).

Belongs to the glycosyltransferase 2 family. As to expression, endothelial cells.

It localises to the cytoplasm. It functions in the pathway protein modification; protein glycosylation. In terms of biological role, glycosyltransferase with a proposed role in glycosphingolipid biosynthesis. Involved in susceptibility to pore-forming crystal toxins in conjunction with bre-1, bre-2, bre-4 and bre-5. Involved in resistance to the nematotoxic C.cinerea galectin Cgl2. Has a role in determining brood size. The polypeptide is Beta-1,4-mannosyltransferase bre-3 (bre-3) (Caenorhabditis elegans).